A 421-amino-acid chain; its full sequence is Telomeric repeat-binding factor 1 (421 aa).

The disordered stretch occupies residues 1-30 (MAETVSSAARDAPSREGWTDSDSPEQEEVG). Residue Ala2 is modified to N-acetylalanine. A TRFH mediates dimerization region spans residues 49-255 (ENAELVAEVE…AATKVVENEK (207 aa)). Residue Lys200 forms a Glycyl lysine isopeptide (Lys-Gly) (interchain with G-Cter in SUMO2) linkage. Ser206 bears the Phosphoserine; by ATM mark. Residues 252 to 365 (ENEKARTQAS…PDTDDKSGRR (114 aa)) are interaction with RLIM. Basic and acidic residues predominate over residues 253-266 (NEKARTQASKDRPD). The disordered stretch occupies residues 253-366 (NEKARTQASK…DTDDKSGRRK (114 aa)). Over residues 284–310 (VNGQQSTETEPLVDTVSSIRSHKNALS) the composition is skewed to polar residues. Positions 313–367 (KHRRAPSDFSRNEARTGTLQCETTMERNRRTSGRNRLCVSENQPDTDDKSGRRKR) match the Nuclear localization signal motif. The 58-residue stretch at 362–419 (SGRRKRQTWLWEEDRILKCGVKKYGEGNWAKILSHYKFNNRTSVMLKDRWRTMKRLKL) folds into the HTH myb-type domain. The segment at residues 390-415 (WAKILSHYKFNNRTSVMLKDRWRTMK) is a DNA-binding region (H-T-H motif).

In terms of assembly, homodimer; can contain both isoforms. Found in a complex with POT1; TINF2 and TNKS1. Interacts with ATM, TINF2, TNKS1, TNKS2, PINX1, NEK2 and MAPRE1. Component of the shelterin complex (telosome) composed of TERF1, TERF2, TINF2, TERF2IP ACD and POT1. Interacts with RLIM (via N-terminus). Interacts with FBXO4. Interaction with TINF2 protects against interaction with FBXO4 and subsequent polyubiquitination and proteasomal degradation. Interacts with GNL3L; this interaction promotes homodimerization. Interacts with TIN2. Interactions with GNL3L and TIN2 are mutually exclusive. Interacts with RTEL1. Interacts with CCDC79/TERB1. In terms of processing, phosphorylated preferentially on Ser-219 in an ATM-dependent manner in response to ionizing DNA damage. ADP-ribosylation by TNKS1 or TNKS2 diminishes its ability to bind to telomeric DNA. Post-translationally, ubiquitinated by RLIM/RNF12, leading to its degradation by the proteasome. Ubiquitinated by a SCF (SKP1-CUL1-F-box protein) ubiquitin-protein ligase complex, leading to its degradation by the proteasome.

The protein localises to the nucleus. It is found in the chromosome. The protein resides in the telomere. It localises to the cytoplasm. Its subcellular location is the cytoskeleton. The protein localises to the spindle. Functionally, binds the telomeric double-stranded 5'-TTAGGG-3' repeat and negatively regulates telomere length. Involved in the regulation of the mitotic spindle. Component of the shelterin complex (telosome) that is involved in the regulation of telomere length and protection. Shelterin associates with arrays of double-stranded 5'-TTAGGG-3' repeats added by telomerase and protects chromosome ends; without its protective activity, telomeres are no longer hidden from the DNA damage surveillance and chromosome ends are inappropriately processed by DNA repair pathways. The protein is Telomeric repeat-binding factor 1 (Terf1) of Mus musculus (Mouse).